We begin with the raw amino-acid sequence, 515 residues long: MKVFCVHPSPLMYTKVFLRLEPLGLELVAESLRRAGHDIRLMDLQVESHADFLRELDTWRPDVVCFSLNYLANVPEVIDLAKTAKSRLPECFTFVGGHSASFVAKDLLDHGEGLLDCVLRGEGEAGAPKLLETLARRGNIDEVPGVVSLTGEGPPPGFTDNLDEHLPARDLLKYRRKYFLGTLDPCASIEFSRGCPWDCSFCSAWTFYGRSYRVMSTERIMEDLRRIKEPGIFIVDDVAFIQAQHGMEIGEAIAREGIRKQYYLETRGDVLLRNKEVFKLWKKLGMEYMFLGVEAIDAEGLQKFRKRVSLGKNFEALEFARSLGITVAINLIADPDWDRERFEVIRQWCMEIPEIVNISVNTPYPGTESWHTESRQLTTRDYRLFDIQHAVLPTRLPLPEFYGELVKTQQVLYKKHMGWAAARDTLKILGGHLLRGQTNFLRSLWKFNSVFNPELQLADHRQPVKYPMTLPPAPTEQKIEAKTLYVHRSQGRKSRALDDATEKFVDEGRMGAATG.

One can recognise a B12-binding domain in the interval 8 to 141; the sequence is PSPLMYTKVF…ETLARRGNID (134 aa). The Radical SAM core domain maps to 181–395; it reads GTLDPCASIE…DIQHAVLPTR (215 aa). Residues Cys-195, Cys-199, and Cys-202 each coordinate [4Fe-4S] cluster.

Belongs to the radical SAM superfamily. It depends on [4Fe-4S] cluster as a cofactor.

Its function is as follows. Required for methylation of hopanoids at the C-3 position. The polypeptide is Hopanoid C-3 methylase (Methylococcus capsulatus (strain ATCC 33009 / NCIMB 11132 / Bath)).